Consider the following 156-residue polypeptide: Probable succinate transporter subunit YjjB (156 aa).

The next 4 membrane-spanning stretches (helical) occupy residues 7 to 27, 54 to 74, 86 to 106, and 128 to 148; these read WALLQDMVLAAIPALGFAMVF, FGMNIELASLVASIMIGVIGI, VFTVAAVIPMFPGISAYTAMI, and FLKASFIVGALSIGLSLPGLW.

This sequence belongs to the ThrE exporter (TC 2.A.79) family. As to quaternary structure, the transporter is composed of YjjB and YjjP.

The protein resides in the cell inner membrane. Its function is as follows. Involved in succinate export with YjjP. Both proteins are required for export. The protein is Probable succinate transporter subunit YjjB of Yersinia pseudotuberculosis serotype I (strain IP32953).